The sequence spans 302 residues: MLRHVFLFLSQNKTLTKFAKAYGTRLGARRFVAGDTIESAVKTVKRLNRSGLCATIDYLGEYAASEKEANQVAEECKKAIQAIAEHQLNSELSLKLTSIGLDLSEELALTHLRAILSVAKQYDVAVTIDMEDYSHYEQTLSIYRQCKQEFEKLGTVIQAYLYRAAEDIRKMRDLKPNLRLVKGAYKESAAVAFPDKRGTDLHFQSLIKLQLLSGNYTAVATHDDDIIAFTKQLVAEHQIPASQFEFQMLYGIRPERQKELAKEGYRMRVYVPYGTDWFSYFMRRIAERPANAAFVLKGILKK.

K95 provides a ligand contact to substrate. D129 is an active-site residue. Residues M130 and Q158 each coordinate FAD. R179 is a catalytic residue. FAD contacts are provided by residues K182–A184 and T221–H222. R283–R284 is a substrate binding site.

Belongs to the proline dehydrogenase family. FAD is required as a cofactor.

It catalyses the reaction L-proline + a quinone = (S)-1-pyrroline-5-carboxylate + a quinol + H(+). It functions in the pathway amino-acid degradation; L-proline degradation into L-glutamate; L-glutamate from L-proline: step 1/2. Converts proline to delta-1-pyrroline-5-carboxylate. The chain is Proline dehydrogenase 1 (fadM) from Bacillus subtilis (strain 168).